Reading from the N-terminus, the 250-residue chain is 3-deoxy-manno-octulosonate cytidylyltransferase (250 aa).

This sequence belongs to the KdsB family.

It is found in the cytoplasm. The enzyme catalyses 3-deoxy-alpha-D-manno-oct-2-ulosonate + CTP = CMP-3-deoxy-beta-D-manno-octulosonate + diphosphate. It functions in the pathway nucleotide-sugar biosynthesis; CMP-3-deoxy-D-manno-octulosonate biosynthesis; CMP-3-deoxy-D-manno-octulosonate from 3-deoxy-D-manno-octulosonate and CTP: step 1/1. The protein operates within bacterial outer membrane biogenesis; lipopolysaccharide biosynthesis. Functionally, activates KDO (a required 8-carbon sugar) for incorporation into bacterial lipopolysaccharide in Gram-negative bacteria. This is 3-deoxy-manno-octulosonate cytidylyltransferase from Yersinia enterocolitica serotype O:8 / biotype 1B (strain NCTC 13174 / 8081).